A 90-amino-acid chain; its full sequence is High mobility group nucleosome-binding domain-containing protein 4 (90 aa).

The tract at residues 1–90 is disordered; sequence MPKRKAKGDA…QKAEGTGDAK (90 aa). Over residues 7 to 23 the composition is skewed to basic and acidic residues; it reads KGDAKGDKGKVKDEPQR. Ser-29 carries the ADP-ribosylserine modification. Basic and acidic residues predominate over residues 37 to 64; that stretch reads PEPRPKKAPAKKGEKLAKGRKGKAEVSK. Residues 65–83 show a composition bias toward polar residues; it reads DGNNPAKNRDASTVQSQKA. Ser-80 is modified (phosphoserine). N6-acetyllysine is present on Lys-82.

It belongs to the HMGN family.

It is found in the nucleus. This chain is High mobility group nucleosome-binding domain-containing protein 4 (HMGN4), found in Bos taurus (Bovine).